The primary structure comprises 261 residues: Trifolitoxin immunity protein (261 aa).

Functionally, required for TFX resistance. The chain is Trifolitoxin immunity protein (tfxG) from Rhizobium leguminosarum bv. trifolii.